The chain runs to 992 residues: UPF0182 protein RHA1_ro06389 (992 aa).

7 helical membrane-spanning segments follow: residues 18-38 (VLLVLALVVAALLLVGPRLIS), 63-83 (LLLFLVVGVVVGGIVWLALLL), 114-134 (LFGLAIPIAVGLLAGLIAQSS), 174-194 (WLFVAVLLAFFASLVTHYIFG), 211-231 (VQLAVLAGTFILLKAVAYWFD), 260-280 (KLILLAIAVICAGAFFAAIFL), and 288-308 (MATALLVLSSILVGAVWPLVV). The disordered stretch occupies residues 904-948 (TGSVATAPSAEEGTPPETGTTPPVDQGAAPAPTAPATPPSGTDVS). The span at 908–934 (ATAPSAEEGTPPETGTTPPVDQGAAPA) shows a compositional bias: low complexity.

The protein belongs to the UPF0182 family.

The protein localises to the cell membrane. This Rhodococcus jostii (strain RHA1) protein is UPF0182 protein RHA1_ro06389.